The sequence spans 218 residues: Probable transaldolase (218 aa).

Lys-87 serves as the catalytic Schiff-base intermediate with substrate.

It belongs to the transaldolase family. Type 3B subfamily.

The protein resides in the cytoplasm. It carries out the reaction D-sedoheptulose 7-phosphate + D-glyceraldehyde 3-phosphate = D-erythrose 4-phosphate + beta-D-fructose 6-phosphate. It functions in the pathway carbohydrate degradation; pentose phosphate pathway; D-glyceraldehyde 3-phosphate and beta-D-fructose 6-phosphate from D-ribose 5-phosphate and D-xylulose 5-phosphate (non-oxidative stage): step 2/3. In terms of biological role, transaldolase is important for the balance of metabolites in the pentose-phosphate pathway. The sequence is that of Probable transaldolase from Phocaeicola vulgatus (strain ATCC 8482 / DSM 1447 / JCM 5826 / CCUG 4940 / NBRC 14291 / NCTC 11154) (Bacteroides vulgatus).